A 237-amino-acid chain; its full sequence is D-aminoacyl-tRNA deacylase (237 aa).

It belongs to the DtdA deacylase family. In terms of assembly, monomer. Zn(2+) is required as a cofactor.

The catalysed reaction is a D-aminoacyl-tRNA + H2O = a tRNA + a D-alpha-amino acid + H(+). It catalyses the reaction glycyl-tRNA(Ala) + H2O = tRNA(Ala) + glycine + H(+). In terms of biological role, D-aminoacyl-tRNA deacylase with broad substrate specificity. By recycling D-aminoacyl-tRNA to D-amino acids and free tRNA molecules, this enzyme counteracts the toxicity associated with the formation of D-aminoacyl-tRNA entities in vivo. The polypeptide is D-aminoacyl-tRNA deacylase (Metallosphaera sedula (strain ATCC 51363 / DSM 5348 / JCM 9185 / NBRC 15509 / TH2)).